Here is a 143-residue protein sequence, read N- to C-terminus: Zinc-containing ferredoxin (143 aa).

The N-terminal extension stretch occupies residues 13 to 60 (PIDEHFLENDKDYPVTGQHNGHDVRAEGMQRLDADGKPYPTKLGIHGT). His31, His34, and His58 together coordinate Zn(2+). 2 4Fe-4S ferredoxin-type domains span residues 60–89 (THVA…WNLN) and 115–143 (KCDP…KITP). The [3Fe-4S] cluster site is built by Cys69 and Cys75. Position 79 (Cys79) interacts with [4Fe-4S] cluster. Residue Asp117 participates in Zn(2+) binding. [4Fe-4S] cluster contacts are provided by Cys124, Cys127, and Cys130. Residue Cys134 participates in [3Fe-4S] cluster binding.

The cofactor is [3Fe-4S] cluster. Requires [4Fe-4S] cluster as cofactor. Zn(2+) is required as a cofactor.

Ferredoxins are iron-sulfur proteins that transfer electrons in a wide variety of metabolic reactions. The chain is Zinc-containing ferredoxin (zfx) from Thermoplasma acidophilum (strain ATCC 25905 / DSM 1728 / JCM 9062 / NBRC 15155 / AMRC-C165).